The chain runs to 263 residues: Lens fiber major intrinsic protein (263 aa).

The Cytoplasmic portion of the chain corresponds to 1–9 (MWELRSASF). The chain crosses the membrane as a helical span at residues 10 to 29 (WRAIFAEFFATLFYVFFGLG). Over 30–41 (SSLRWAPGPLHV) the chain is Extracellular. Residues 42-59 (LQVAMAFGLALATLVQSV) traverse the membrane as a helical segment. Topologically, residues 60–61 (GH) are cytoplasmic. The segment at residues 62 to 77 (ISGAHVNPAVTFAFLV) is an intramembrane region (discontinuously helical). The NPA 1 signature appears at 68–70 (NPA). Residues 78-82 (GSQMS) lie on the Cytoplasmic side of the membrane. A helical transmembrane segment spans residues 83–106 (LLRAFCYMAAQLLGAVAGAAVLYS). The Extracellular portion of the chain corresponds to 107 to 127 (VTPPAVRGNLALNTLHPAVSV). A helical membrane pass occupies residues 128 to 148 (GQATTVEIFLTLQFVLCIFAT). Topologically, residues 149–156 (YDERRNGQ) are cytoplasmic. A helical membrane pass occupies residues 157 to 175 (LGSVALAVGFSLALGHLFG). Over 176 to 178 (MYY) the chain is Extracellular. An intramembrane region (discontinuously helical) is located at residues 179–193 (TGAGMNPARSFAPAI). An NPA 2 motif is present at residues 184–186 (NPA). The Extracellular portion of the chain corresponds to 194–200 (LTGNFTN). The chain crosses the membrane as a helical span at residues 201–222 (HWVYWVGPIIGGGLGSLLYDFL). The Cytoplasmic portion of the chain corresponds to 223 to 263 (LFPRLKSISERLSVLKGAKPDVSNGQPEVTGEPVELNTQAL). The tract at residues 227 to 237 (LKSISERLSVL) is interaction with CALM. A phosphoserine mark is found at S235 and S245. Residues N246 and N259 each carry the deamidated asparagine; by deterioration modification.

Belongs to the MIP/aquaporin (TC 1.A.8) family. In terms of assembly, homotetramer; each monomer provides an independent water pore. Two homotetramers on opposing membranes can dimerize, forming a cell-cell junction. Interacts with CALM; the calcium-calmodulin/CALM complex interacts with the cytoplasmic domains of two aquaporins, leading to channel closure. Interacts with BFSP1 (via C-terminus); prevents calcium-dependent inhibition of the water channel activity. In terms of processing, subject to partial proteolytic cleavage in the eye lens core. Partial proteolysis promotes interactions between tetramers from adjoining membranes. Post-translationally, fatty acylated at Met-1 and Lys-238. The acyl modifications, in decreasing order of ion abundance, are: oleoyl (C18:1) &gt; palmitoyl (C16:0) &gt; stearoyl (C18:0) &gt; eicosenoyl (C20:1) &gt; dihomo-gamma-linolenoyl (C20:3) &gt; palmitoleoyl (C16:1) &gt; eicosadienoyl (C20:2). In terms of tissue distribution, expressed in the cortex and nucleus of the retina lens (at protein level). Major component of lens fiber gap junctions.

It localises to the cell membrane. The protein localises to the cell junction. It catalyses the reaction H2O(in) = H2O(out). With respect to regulation, the water channel activity is inhibited by calcium through calmodulin/CALM. Aquaporins form homotetrameric transmembrane channels, with each monomer independently mediating water transport across the plasma membrane along its osmotic gradient. Specifically expressed in lens fiber cells, this aquaporin is crucial for maintaining lens water homeostasis and transparency. Beyond water permeability, it also acts as a cell-to-cell adhesion molecule, forming thin junctions between lens fiber cells that are essential for maintaining the ordered structure and transparency of the lens. This is Lens fiber major intrinsic protein from Homo sapiens (Human).